A 959-amino-acid chain; its full sequence is rDNA transcriptional regulator pol5 (959 aa).

Ser742 and Ser743 each carry phosphoserine. Positions 936-959 (HQQTSTAASSPQKTGHHENEKTNH) are disordered. Residues 937–948 (QQTSTAASSPQK) show a composition bias toward polar residues. The span at 950-959 (GHHENEKTNH) shows a compositional bias: basic and acidic residues.

Belongs to the MYBBP1A family. As to quaternary structure, interacts with cdc10.

It is found in the nucleus. Plays an important role in the regulation of rRNA transcription. Binds to rDNA promoter fragments. In Schizosaccharomyces pombe (strain 972 / ATCC 24843) (Fission yeast), this protein is rDNA transcriptional regulator pol5 (pol5).